A 185-amino-acid polypeptide reads, in one-letter code: NAD(P)H-dependent FMN reductase PA1204 (185 aa).

FMN-binding positions include 13–20 (SLRSGSYN) and 81–83 (YNY). 115 to 122 (SAGRFGTA) contacts NAD(+).

Belongs to the SsuE family. In terms of assembly, homodimer. FMN serves as cofactor.

Its function is as follows. Has NAD(P)H-dependent FMN reductase activity. The protein is NAD(P)H-dependent FMN reductase PA1204 of Pseudomonas aeruginosa (strain ATCC 15692 / DSM 22644 / CIP 104116 / JCM 14847 / LMG 12228 / 1C / PRS 101 / PAO1).